Reading from the N-terminus, the 121-residue chain is Acidic phospholipase A2 PLA-1 (121 aa).

7 disulfides stabilise this stretch: Cys-26/Cys-115, Cys-28/Cys-44, Cys-43/Cys-95, Cys-49/Cys-121, Cys-50/Cys-88, Cys-57/Cys-81, and Cys-75/Cys-86. 3 residues coordinate Ca(2+): Tyr-27, Gly-29, and Gly-31. His-47 is a catalytic residue. Asp-48 contributes to the Ca(2+) binding site. Asp-89 is an active-site residue.

This sequence belongs to the phospholipase A2 family. Group II subfamily. D49 sub-subfamily. Ca(2+) serves as cofactor. In terms of tissue distribution, expressed by the venom gland.

It localises to the secreted. The enzyme catalyses a 1,2-diacyl-sn-glycero-3-phosphocholine + H2O = a 1-acyl-sn-glycero-3-phosphocholine + a fatty acid + H(+). Its function is as follows. PLA2 catalyzes the calcium-dependent hydrolysis of the 2-acyl groups in 3-sn-phosphoglycerides. The sequence is that of Acidic phospholipase A2 PLA-1 from Eristicophis macmahoni (Leaf-nosed viper).